A 214-amino-acid polypeptide reads, in one-letter code: Proteasome subunit beta type-6 (214 aa).

Positions Met-1 to Gly-14 are cleaved as a propeptide — removed in mature form. Thr-15 (nucleophile) is an active-site residue.

This sequence belongs to the peptidase T1B family. In terms of assembly, the 26S proteasome consists of a 20S proteasome core and two 19S regulatory subunits. The 20S proteasome core is composed of 28 subunits that are arranged in four stacked rings, resulting in a barrel-shaped structure. The two end rings are each formed by seven alpha subunits, and the two central rings are each formed by seven beta subunits. The catalytic chamber with the active sites is on the inside of the barrel.

The protein resides in the cytoplasm. It is found in the nucleus. It catalyses the reaction Cleavage of peptide bonds with very broad specificity.. The proteasome is a multicatalytic proteinase complex which is characterized by its ability to cleave peptides with Arg, Phe, Tyr, Leu, and Glu adjacent to the leaving group at neutral or slightly basic pH. The proteasome has an ATP-dependent proteolytic activity. In Dictyostelium discoideum (Social amoeba), this protein is Proteasome subunit beta type-6 (psmB6).